The chain runs to 2211 residues: Activating signal cointegrator 1 complex subunit 3 (2211 aa).

In terms of domain architecture, Helicase ATP-binding 1 spans 495–678; the sequence is ETAYNTNENM…FLHVNPYIGL (184 aa). 508 to 515 is an ATP binding site; the sequence is APTGAGKT. A DEVH box motif is present at residues 620 to 623; sequence DEVH. Residues 717 to 923 form the Helicase C-terminal 1 domain; sequence VLKQIMAGHQ…GTVTNVEEAV (207 aa). The SEC63 1 domain maps to 987 to 1296; the sequence is STDLGRTASH…GAEAVCIINF (310 aa). Residues 1345–1520 form the Helicase ATP-binding 2 domain; that stretch reads HTLYHTDCNV…WLNINQMGLF (176 aa). Residue 1358 to 1365 participates in ATP binding; it reads APTGSGKT. The short motif at 1462 to 1465 is the DEIH box element; it reads DEIH. Positions 1553–1760 constitute a Helicase C-terminal 2 domain; the sequence is PAFQAIRSHS…GTITSKQDAM (208 aa). The region spanning 1821–2184 is the SEC63 2 domain; the sequence is PLTYGRIASY…YLGMDQQYDI (364 aa).

The protein belongs to the helicase family.

It localises to the nucleus. It is found in the nucleus speckle. The protein localises to the cytoplasm. The protein resides in the cytosol. It carries out the reaction Couples ATP hydrolysis with the unwinding of duplex DNA by translocating in the 3'-5' direction.. The enzyme catalyses ATP + H2O = ADP + phosphate + H(+). Its function is as follows. 3'-5' DNA helicase involved in repair of alkylated DNA. Promotes DNA unwinding to generate single-stranded substrate needed for ALKBH3, enabling ALKBH3 to process alkylated N3-methylcytosine (3mC) within double-stranded regions. Also involved in activation of the ribosome quality control (RQC) pathway, a pathway that degrades nascent peptide chains during problematic translation. Drives the splitting of stalled ribosomes. This Gallus gallus (Chicken) protein is Activating signal cointegrator 1 complex subunit 3 (ascc3).